The following is a 1502-amino-acid chain: Clustered mitochondria protein homolog (1502 aa).

Disordered regions lie at residues Met1–Asp62, Ala571–Met615, Ala755–Arg799, Lys1054–Val1085, Ala1381–Gly1403, and Gly1429–Arg1502. A compositionally biased stretch (low complexity) spans Ala7 to Leu35. The span at Lys53–Asp62 shows a compositional bias: basic and acidic residues. In terms of domain architecture, Clu spans Glu399–Leu693. The segment covering Thr575 to Glu586 has biased composition (acidic residues). The span at Gly587–Ser606 shows a compositional bias: basic and acidic residues. The segment covering Glu781–Ala792 has biased composition (low complexity). A compositionally biased stretch (basic and acidic residues) spans Lys1054 to Ser1069. The segment covering Gly1429–Gly1451 has biased composition (low complexity). The span at Arg1462–Val1471 shows a compositional bias: basic and acidic residues. Over residues Lys1486–Arg1502 the composition is skewed to basic residues.

It belongs to the CLU family. In terms of assembly, may associate with the eukaryotic translation initiation factor 3 (eIF-3) complex.

It is found in the cytoplasm. In terms of biological role, mRNA-binding protein involved in proper cytoplasmic distribution of mitochondria. This chain is Clustered mitochondria protein homolog, found in Cryptococcus neoformans var. neoformans serotype D (strain B-3501A) (Filobasidiella neoformans).